The primary structure comprises 69 residues: Probable cold shock protein y4cH (69 aa).

Positions 5 to 65 constitute a CSD domain; sequence GTVKWFNATK…DRKSGKMSAD (61 aa).

The protein resides in the cytoplasm. This Sinorhizobium fredii (strain NBRC 101917 / NGR234) protein is Probable cold shock protein y4cH.